A 435-amino-acid polypeptide reads, in one-letter code: MQNHHHQQSSYGGGYPGQAYREQHPPPNPYGYGQPSPQPGYGAPPPHNGYATAVGIRPAAATYWKRGVQWKTAWYVIAFGAGRNASALESVKYAAADTCNTGMNQYQNPYSHGHQGGPPPPPTDPVAFGHGAPQGYSFQYSRCTGKRKALLIGINYFGQKGQLRGCINDVKNMSTYLNQNFGYAREDMVLLTDDQQNPMSQPTKANILRAMHWLVKDAQPNDSLFFHYSGHGGQTPDLDGDEEDGYDEVIYPVDFRQAGHIVDDEMHRIMVRPLRPGVRLTAIFDSCHSGSALDLPYIYSTQGILKEPNLAKEAGQGLLGVVSAYARGDMGGMVSTAVGFLKRATKGDEAYTRSKQTKTSPADVIMWSGSKDSQTSQDAQIAGQATGAMSWAFITALRKNPQQSYVQLLNSIRDELATKYSQKPQLSCSHPLGKH.

2 disordered regions span residues 1–46 (MQNH…APPP) and 106–129 (YQNP…VAFG). Residues 36–46 (SPQPGYGAPPP) show a composition bias toward pro residues. Active-site residues include H231 and C287.

Belongs to the peptidase C14B family.

Functionally, involved in cell death (apoptosis). The sequence is that of Metacaspase-1A (casA) from Neosartorya fischeri (strain ATCC 1020 / DSM 3700 / CBS 544.65 / FGSC A1164 / JCM 1740 / NRRL 181 / WB 181) (Aspergillus fischerianus).